The primary structure comprises 451 residues: tRNA-2-methylthio-N(6)-dimethylallyladenosine synthase (451 aa).

Residues 18 to 134 (ARVYLETYGC…LPNLLDLAES (117 aa)) enclose the MTTase N-terminal domain. [4Fe-4S] cluster is bound by residues cysteine 27, cysteine 63, cysteine 97, cysteine 170, cysteine 174, and cysteine 177. One can recognise a Radical SAM core domain in the interval 156–386 (RKNGHSAFLA…IALQQKISAE (231 aa)). The TRAM domain occupies 389–451 (RNDIGNTHEV…TSATLIGNAL (63 aa)).

Belongs to the methylthiotransferase family. MiaB subfamily. Monomer. [4Fe-4S] cluster is required as a cofactor.

Its subcellular location is the cytoplasm. It carries out the reaction N(6)-dimethylallyladenosine(37) in tRNA + (sulfur carrier)-SH + AH2 + 2 S-adenosyl-L-methionine = 2-methylsulfanyl-N(6)-dimethylallyladenosine(37) in tRNA + (sulfur carrier)-H + 5'-deoxyadenosine + L-methionine + A + S-adenosyl-L-homocysteine + 2 H(+). Functionally, catalyzes the methylthiolation of N6-(dimethylallyl)adenosine (i(6)A), leading to the formation of 2-methylthio-N6-(dimethylallyl)adenosine (ms(2)i(6)A) at position 37 in tRNAs that read codons beginning with uridine. The protein is tRNA-2-methylthio-N(6)-dimethylallyladenosine synthase of Chloroherpeton thalassium (strain ATCC 35110 / GB-78).